We begin with the raw amino-acid sequence, 433 residues long: Trigger factor (433 aa).

In terms of domain architecture, PPIase FKBP-type spans 161-246 (DSRVTIDFIG…LHKVEAQELP (86 aa)).

The protein belongs to the FKBP-type PPIase family. Tig subfamily.

It is found in the cytoplasm. The enzyme catalyses [protein]-peptidylproline (omega=180) = [protein]-peptidylproline (omega=0). In terms of biological role, involved in protein export. Acts as a chaperone by maintaining the newly synthesized protein in an open conformation. Functions as a peptidyl-prolyl cis-trans isomerase. This chain is Trigger factor, found in Photobacterium profundum (strain SS9).